A 211-amino-acid polypeptide reads, in one-letter code: Pyridoxine/pyridoxamine 5'-phosphate oxidase (211 aa).

Substrate is bound by residues 7–10 (RRDY) and Lys-65. FMN contacts are provided by residues 60-65 (RIVLLK), 75-76 (YT), Arg-81, Lys-82, and Gln-104. Substrate contacts are provided by Tyr-122, Arg-126, and Ser-130. Residues 139–140 (QS) and Trp-184 contribute to the FMN site. 190–192 (RLH) is a binding site for substrate. Residue Arg-194 coordinates FMN.

It belongs to the pyridoxamine 5'-phosphate oxidase family. In terms of assembly, homodimer. FMN serves as cofactor.

The catalysed reaction is pyridoxamine 5'-phosphate + O2 + H2O = pyridoxal 5'-phosphate + H2O2 + NH4(+). The enzyme catalyses pyridoxine 5'-phosphate + O2 = pyridoxal 5'-phosphate + H2O2. The protein operates within cofactor metabolism; pyridoxal 5'-phosphate salvage; pyridoxal 5'-phosphate from pyridoxamine 5'-phosphate: step 1/1. It participates in cofactor metabolism; pyridoxal 5'-phosphate salvage; pyridoxal 5'-phosphate from pyridoxine 5'-phosphate: step 1/1. Functionally, catalyzes the oxidation of either pyridoxine 5'-phosphate (PNP) or pyridoxamine 5'-phosphate (PMP) into pyridoxal 5'-phosphate (PLP). The chain is Pyridoxine/pyridoxamine 5'-phosphate oxidase from Aliivibrio fischeri (strain ATCC 700601 / ES114) (Vibrio fischeri).